Reading from the N-terminus, the 195-residue chain is MSQLPIPLPLNESRWRYVTASGGGMTVAFLAGSGGSITLLSPEGENVSFRYGGVGGGIGLGMRLPRFGKVNLNVKGKSVGGAGALEALPSTGTVLVADGLVGRDLSRGDFTGPCMYVELGAGVIAGGSGTAILFGLDPKLLAAVALASASPLTAALGASMSRQLLQSSRGALLMAGVNVGAQFGGGAAAYLGALF.

The next 4 helical transmembrane spans lie at 20–40 (ASGGGMTVAFLAGSGGSITLL), 116–136 (YVELGAGVIAGGSGTAILFGL), 140–160 (LLAAVALASASPLTAALGASM), and 171–191 (ALLMAGVNVGAQFGGGAAAYL).

It is found in the host membrane. Its subcellular location is the secreted. In terms of biological role, toxin secreted by the H1 type VI (H1-T6SS) secretion system into the periplasm of recipient cells. In Pseudomonas aeruginosa (strain ATCC 15692 / DSM 22644 / CIP 104116 / JCM 14847 / LMG 12228 / 1C / PRS 101 / PAO1), this protein is Toxin protein Tse4.